The primary structure comprises 258 residues: MKGILGRKIGMTQIFATDGRLIPVTVVEVEHNIVLRVLTKEQNGYQALQLAVEDKRISLVSKPDQGQFKKANTTPKRFVKEIRNMDGYNSGDIIKADIFTAGEFVDVTGTSKGKGFTGSIKRHNYSRGPMGHGSGYHRGVGSMGAIAPNRILKSKKMPGHIGTEKVTIQNLEIIAIDTEKNALLVKGSIPGPKKQFVVIKEAIKGLKPNTPTELLKRTVETKTPDPTVKEEKPVEGVVDAAVDTTLTAVTDAPASKTE.

Belongs to the universal ribosomal protein uL3 family. In terms of assembly, part of the 50S ribosomal subunit. Forms a cluster with proteins L14 and L19.

Functionally, one of the primary rRNA binding proteins, it binds directly near the 3'-end of the 23S rRNA, where it nucleates assembly of the 50S subunit. This chain is Large ribosomal subunit protein uL3, found in Spiroplasma kunkelii.